A 1070-amino-acid chain; its full sequence is DNA-directed RNA polymerase subunit beta (1070 aa).

Belongs to the RNA polymerase beta chain family. In plastids the minimal PEP RNA polymerase catalytic core is composed of four subunits: alpha, beta, beta', and beta''. When a (nuclear-encoded) sigma factor is associated with the core the holoenzyme is formed, which can initiate transcription.

Its subcellular location is the plastid. It is found in the chloroplast. It carries out the reaction RNA(n) + a ribonucleoside 5'-triphosphate = RNA(n+1) + diphosphate. Its function is as follows. DNA-dependent RNA polymerase catalyzes the transcription of DNA into RNA using the four ribonucleoside triphosphates as substrates. This Nandina domestica (Heavenly bamboo) protein is DNA-directed RNA polymerase subunit beta.